The chain runs to 248 residues: MFKDGSLIPYLTAGDPDKQSTLNFLLALDEYAGAIELGIPFSDPIADGKTIQESHYRALKNGFKLREAFWIVKEFRRHSSTPIVLMTYYNPIYRAGVRNFLAEAKASGVDGILVVDLPVFHAKEFTEIAREEGIKTVFLAAPNTPDERLKVIDDMTTGFVYLVSLYGTTGAREEIPKTAYDLLRRAKRICRNKVAVGFGVSKREHVVSLLKEGANGVVVGSALVKIIGEKGREATEFLKKKVEELLGI.

Residues glutamate 36 and aspartate 47 each act as proton acceptor in the active site.

This sequence belongs to the TrpA family. In terms of assembly, tetramer of two alpha and two beta chains.

The enzyme catalyses (1S,2R)-1-C-(indol-3-yl)glycerol 3-phosphate + L-serine = D-glyceraldehyde 3-phosphate + L-tryptophan + H2O. It functions in the pathway amino-acid biosynthesis; L-tryptophan biosynthesis; L-tryptophan from chorismate: step 5/5. In terms of biological role, the alpha subunit is responsible for the aldol cleavage of indoleglycerol phosphate to indole and glyceraldehyde 3-phosphate. This chain is Tryptophan synthase alpha chain, found in Pyrococcus furiosus (strain ATCC 43587 / DSM 3638 / JCM 8422 / Vc1).